A 198-amino-acid polypeptide reads, in one-letter code: Endonuclease V (198 aa).

The Mg(2+) site is built by D38 and D101.

It belongs to the endonuclease V family. It depends on Mg(2+) as a cofactor.

The protein localises to the cytoplasm. It catalyses the reaction Endonucleolytic cleavage at apurinic or apyrimidinic sites to products with a 5'-phosphate.. Its function is as follows. DNA repair enzyme involved in the repair of deaminated bases. Selectively cleaves double-stranded DNA at the second phosphodiester bond 3' to a deoxyinosine leaving behind the intact lesion on the nicked DNA. This Saccharolobus islandicus (strain M.16.4 / Kamchatka #3) (Sulfolobus islandicus) protein is Endonuclease V.